The sequence spans 488 residues: uncharacterized protein (488 aa).

The protein resides in the cytoplasm. The protein localises to the nucleus. This is an uncharacterized protein from Schizosaccharomyces pombe (strain 972 / ATCC 24843) (Fission yeast).